Here is a 121-residue protein sequence, read N- to C-terminus: Large ribosomal subunit protein uL14 (121 aa).

It belongs to the universal ribosomal protein uL14 family. As to quaternary structure, part of the 50S ribosomal subunit. Forms a cluster with proteins L3 and L19. In the 70S ribosome, L14 and L19 interact and together make contacts with the 16S rRNA in bridges B5 and B8.

Functionally, binds to 23S rRNA. Forms part of two intersubunit bridges in the 70S ribosome. The sequence is that of Large ribosomal subunit protein uL14 from Porphyromonas gingivalis (strain ATCC 33277 / DSM 20709 / CIP 103683 / JCM 12257 / NCTC 11834 / 2561).